Here is a 487-residue protein sequence, read N- to C-terminus: Multiple inositol polyphosphate phosphatase 1 (487 aa).

The first 30 residues, 1–30, serve as a signal peptide directing secretion; sequence MLRAPGCLLRTSVAPAAALAAALLSSLARC. The active site involves H89. N-linked (GlcNAc...) asparagine glycosylation is found at N242 and N481. The short motif at 484-487 is the Prevents secretion from ER element; it reads SDEL.

It belongs to the histidine acid phosphatase family. MINPP1 subfamily. N-glycosylated. As to expression, widely expressed with highest levels in kidney, liver, cerebellum and placenta.

Its subcellular location is the endoplasmic reticulum lumen. It is found in the secreted. It localises to the cell membrane. The enzyme catalyses 1D-myo-inositol hexakisphosphate + H2O = 1D-myo-inositol 1,2,4,5,6-pentakisphosphate + phosphate. The catalysed reaction is 1D-myo-inositol 1,2,4,5,6-pentakisphosphate + H2O = 1D-myo-inositol 1,2,5,6-tetrakisphosphate + phosphate. It catalyses the reaction 1D-myo-inositol 1,2,5,6-tetrakisphosphate + H2O = 1D-myo-inositol 1,2,6-trisphosphate + phosphate. It carries out the reaction 1D-myo-inositol 1,2,6-trisphosphate + H2O = 1D-myo-inositol 1,2-bisphosphate + phosphate. The enzyme catalyses 1D-myo-inositol 1,2-bisphosphate + H2O = 1D-myo-inositol 2-phosphate + phosphate. The catalysed reaction is 1D-myo-inositol hexakisphosphate + H2O = 1D-myo-inositol 1,2,3,5,6-pentakisphosphate + phosphate. It catalyses the reaction 1D-myo-inositol 1,2,3,5,6-pentakisphosphate + H2O = 1D-myo-inositol 1,2,3,6-tetrakisphosphate + phosphate. It carries out the reaction 1D-myo-inositol 1,2,3,6-tetrakisphosphate + H2O = 1D-myo-inositol 1,2,3-trisphosphate + phosphate. The enzyme catalyses 1D-myo-inositol 1,2,3-trisphosphate + H2O = 1D-myo-inositol 2,3-bisphosphate + phosphate. The catalysed reaction is 1D-myo-inositol 2,3-bisphosphate + H2O = 1D-myo-inositol 2-phosphate + phosphate. It catalyses the reaction 1D-myo-inositol 1,3,4,5,6-pentakisphosphate + H2O = 1D-myo-inositol 1,4,5,6-tetrakisphosphate + phosphate. It carries out the reaction 1D-myo-inositol 1,4,5,6-tetrakisphosphate + H2O = 1D-myo-inositol 1,4,5-trisphosphate + phosphate. The enzyme catalyses (2R)-2,3-bisphosphoglycerate + H2O = (2R)-2-phosphoglycerate + phosphate. Its function is as follows. Multiple inositol polyphosphate phosphatase that hydrolyzes 1D-myo-inositol 1,3,4,5,6-pentakisphosphate (InsP5[2OH]) and 1D-myo-inositol hexakisphosphate (InsP6) to a range of less phosphorylated inositol phosphates. This regulates the availability of these various small molecule second messengers and metal chelators which control many aspects of cell physiology. Has a weak in vitro activity towards 1D-myo-inositol 1,4,5-trisphosphate which is unlikely to be physiologically relevant. By regulating intracellular inositol polyphosphates pools, which act as metal chelators, it may control the availability of intracellular calcium and iron, which are important for proper neuronal development and homeostasis. May have a dual substrate specificity, and function as a 2,3-bisphosphoglycerate 3-phosphatase hydrolyzing 2,3-bisphosphoglycerate to 2-phosphoglycerate. 2,3-bisphosphoglycerate (BPG) is formed as part of the Rapoport-Luebering glycolytic bypass and is a regulator of systemic oxygen homeostasis as the major allosteric effector of hemoglobin. This chain is Multiple inositol polyphosphate phosphatase 1, found in Homo sapiens (Human).